Reading from the N-terminus, the 262-residue chain is Pyridoxine 5'-phosphate synthase (262 aa).

Asparagine 6 contributes to the 3-amino-2-oxopropyl phosphate binding site. Residue 8–9 (DH) participates in 1-deoxy-D-xylulose 5-phosphate binding. Residue arginine 17 coordinates 3-amino-2-oxopropyl phosphate. Histidine 43 acts as the Proton acceptor in catalysis. 2 residues coordinate 1-deoxy-D-xylulose 5-phosphate: arginine 45 and histidine 50. Glutamate 70 functions as the Proton acceptor in the catalytic mechanism. Threonine 102 provides a ligand contact to 1-deoxy-D-xylulose 5-phosphate. Catalysis depends on histidine 215, which acts as the Proton donor. 3-amino-2-oxopropyl phosphate is bound by residues glycine 216 and 237-238 (GH).

Belongs to the PNP synthase family. In terms of assembly, homooctamer; tetramer of dimers.

The protein resides in the cytoplasm. The catalysed reaction is 3-amino-2-oxopropyl phosphate + 1-deoxy-D-xylulose 5-phosphate = pyridoxine 5'-phosphate + phosphate + 2 H2O + H(+). Its pathway is cofactor biosynthesis; pyridoxine 5'-phosphate biosynthesis; pyridoxine 5'-phosphate from D-erythrose 4-phosphate: step 5/5. In terms of biological role, catalyzes the complicated ring closure reaction between the two acyclic compounds 1-deoxy-D-xylulose-5-phosphate (DXP) and 3-amino-2-oxopropyl phosphate (1-amino-acetone-3-phosphate or AAP) to form pyridoxine 5'-phosphate (PNP) and inorganic phosphate. This Helicobacter pylori (strain G27) protein is Pyridoxine 5'-phosphate synthase.